A 226-amino-acid polypeptide reads, in one-letter code: N-(5'-phosphoribosyl)anthranilate isomerase (226 aa).

It belongs to the TrpF family.

The enzyme catalyses N-(5-phospho-beta-D-ribosyl)anthranilate = 1-(2-carboxyphenylamino)-1-deoxy-D-ribulose 5-phosphate. The protein operates within amino-acid biosynthesis; L-tryptophan biosynthesis; L-tryptophan from chorismate: step 3/5. This is N-(5'-phosphoribosyl)anthranilate isomerase (trpF) from Methanocaldococcus jannaschii (strain ATCC 43067 / DSM 2661 / JAL-1 / JCM 10045 / NBRC 100440) (Methanococcus jannaschii).